A 239-amino-acid chain; its full sequence is Small ribosomal subunit protein uS3c (239 aa).

The KH type-2 domain occupies 43 to 139 (IKNYIQKNRK…RLNIGIEKVK (97 aa)).

This sequence belongs to the universal ribosomal protein uS3 family. In terms of assembly, part of the 30S ribosomal subunit.

The protein localises to the plastid. It is found in the chloroplast. This chain is Small ribosomal subunit protein uS3c (rps3), found in Oryza nivara (Indian wild rice).